Here is a 183-residue protein sequence, read N- to C-terminus: Capsid protein (183 aa).

The disordered stretch occupies residues 136 to 183; sequence NAPILSTLPETTVVRRRGRSPRRRTPSPRRRRSQSPRRRRSQSPASQC. Basic residues predominate over residues 149–176; sequence VRRRGRSPRRRTPSPRRRRSQSPRRRRS. Residues Ser155, Ser162, and Ser170 each carry the phosphoserine; by host modification. The 1; half-length repeat unit spans residues 155-161; the sequence is SPRRRTP. A 3 X 8 AA repeats of S-P-R-R-R-[PR]-S-Q region spans residues 155–177; the sequence is SPRRRTPSPRRRRSQSPRRRRSQ. Positions 158 to 175 match the Bipartite nuclear localization signal motif; that stretch reads RRTPSPRRRRSQSPRRRR. 2 tandem repeats follow at residues 162–169 and 170–177. The RNA binding stretch occupies residues 177 to 183; sequence QSPASQC.

Belongs to the orthohepadnavirus core antigen family. Homodimerizes, then multimerizes. Interacts with cytosol exposed regions of viral L glycoprotein present in the reticulum-to-Golgi compartment. Interacts with human FLNB. Phosphorylated form interacts with host importin alpha; this interaction depends on the exposure of the NLS, which itself depends upon genome maturation and/or phosphorylation of the capsid protein. Interacts with host NUP153. Post-translationally, phosphorylated by host SRPK1, SRPK2, and maybe protein kinase C or GAPDH. Phosphorylation is critical for pregenomic RNA packaging. Protein kinase C phosphorylation is stimulated by HBx protein and may play a role in transport of the viral genome to the nucleus at the late step during the viral replication cycle.

The protein localises to the virion. It localises to the host cytoplasm. In terms of biological role, self assembles to form an icosahedral capsid. Most capsids appear to be large particles with an icosahedral symmetry of T=4 and consist of 240 copies of capsid protein, though a fraction forms smaller T=3 particles consisting of 180 capsid proteins. Entering capsids are transported along microtubules to the nucleus. Phosphorylation of the capsid is thought to induce exposure of nuclear localization signal in the C-terminal portion of the capsid protein that allows binding to the nuclear pore complex via the importin (karyopherin-) alpha and beta. Capsids are imported in intact form through the nuclear pore into the nuclear basket, where it probably binds NUP153. Only capsids that contain the mature viral genome can release the viral DNA and capsid protein into the nucleoplasm. Immature capsids get stuck in the basket. Capsids encapsulate the pre-genomic RNA and the P protein. Pre-genomic RNA is reverse-transcribed into DNA while the capsid is still in the cytoplasm. The capsid can then either be directed to the nucleus, providing more genomes for transcription, or bud through the endoplasmic reticulum to provide new virions. In Pan troglodytes (Chimpanzee), this protein is Capsid protein.